An 89-amino-acid polypeptide reads, in one-letter code: Small ribosomal subunit protein uS14 (89 aa).

This sequence belongs to the universal ribosomal protein uS14 family. As to quaternary structure, part of the 30S ribosomal subunit. Contacts proteins S3 and S10.

In terms of biological role, binds 16S rRNA, required for the assembly of 30S particles and may also be responsible for determining the conformation of the 16S rRNA at the A site. The polypeptide is Small ribosomal subunit protein uS14 (Streptococcus pneumoniae serotype 2 (strain D39 / NCTC 7466)).